A 363-amino-acid polypeptide reads, in one-letter code: MPHSYPALSAEQKKELSDIALRIVTPGKGILAADESVGSMAKRLSQIGVENTEENRRLYRQVLFSADDRVKKCIGGVIFFHETLYQKDDNGVPFVRTIQDKGILVGIKVDKGVVPLAGTDGETTTQGLDGLLERCAQYKKDGADFAKWRCVLKISDRTPSALAILENANVLARYASICQQNGIVPIVEPEILPDGDHDLKRCQYVTEKVLAAVYKALSDHHVYLEGTLLKPNMVTPGHACPIKYSPEEIAMATVTALRRTVPPAVPGVTFLSGGQSEEEASLNLNAINRCPLPRPWALTFSYGRALQASALNAWRGQRDNAGAATEEFIKRAEMNGLAAQGRYEGSGDGGAAAQSLYIANHAY.

Y5 is subject to Phosphotyrosine. Residues S36, S39, and S45 each carry the phosphoserine modification. R56 provides a ligand contact to substrate. K111 is subject to N6-acetyllysine. K147 is a substrate binding site. E188 acts as the Proton acceptor in catalysis. K230 serves as the catalytic Schiff-base intermediate with dihydroxyacetone-P.

It belongs to the class I fructose-bisphosphate aldolase family. In terms of assembly, homotetramer. Interacts with ATP6V1E1. Expressed exclusively in Purkinje cells in bands running from anterior to posterior across most of the cerebellum. Expressed at higher levels in the brains of BSE-infected animals.

It catalyses the reaction beta-D-fructose 1,6-bisphosphate = D-glyceraldehyde 3-phosphate + dihydroxyacetone phosphate. It participates in carbohydrate degradation; glycolysis; D-glyceraldehyde 3-phosphate and glycerone phosphate from D-glucose: step 4/4. The protein is Fructose-bisphosphate aldolase C (Aldoc) of Mus musculus (Mouse).